We begin with the raw amino-acid sequence, 204 residues long: Holliday junction branch migration complex subunit RuvA (204 aa).

Positions 1–67 (MIGYLEGKIL…QPKPVLIGFN (67 aa)) are domain I. Positions 68 to 145 (SLEEREFFER…VFAGEHGGEP (78 aa)) are domain II. Residues 146–156 (AGPAPVEENFH) form a flexible linker region. The segment at 156–204 (HLLVLDVLVNQLGHKAAEAKELINQAIKRNPAISSPEELFDEVYRGETG) is domain III.

It belongs to the RuvA family. As to quaternary structure, homotetramer. Forms an RuvA(8)-RuvB(12)-Holliday junction (HJ) complex. HJ DNA is sandwiched between 2 RuvA tetramers; dsDNA enters through RuvA and exits via RuvB. An RuvB hexamer assembles on each DNA strand where it exits the tetramer. Each RuvB hexamer is contacted by two RuvA subunits (via domain III) on 2 adjacent RuvB subunits; this complex drives branch migration. In the full resolvosome a probable DNA-RuvA(4)-RuvB(12)-RuvC(2) complex forms which resolves the HJ.

It localises to the cytoplasm. The RuvA-RuvB-RuvC complex processes Holliday junction (HJ) DNA during genetic recombination and DNA repair, while the RuvA-RuvB complex plays an important role in the rescue of blocked DNA replication forks via replication fork reversal (RFR). RuvA specifically binds to HJ cruciform DNA, conferring on it an open structure. The RuvB hexamer acts as an ATP-dependent pump, pulling dsDNA into and through the RuvAB complex. HJ branch migration allows RuvC to scan DNA until it finds its consensus sequence, where it cleaves and resolves the cruciform DNA. In Desulfatibacillum aliphaticivorans, this protein is Holliday junction branch migration complex subunit RuvA.